A 128-amino-acid polypeptide reads, in one-letter code: Sulfurtransferase TusD (128 aa).

Cys78 acts as the Cysteine persulfide intermediate in catalysis.

Belongs to the DsrE/TusD family. Heterohexamer, formed by a dimer of trimers. The hexameric TusBCD complex contains 2 copies each of TusB, TusC and TusD. The TusBCD complex interacts with TusE.

The protein resides in the cytoplasm. Part of a sulfur-relay system required for 2-thiolation of 5-methylaminomethyl-2-thiouridine (mnm(5)s(2)U) at tRNA wobble positions. Accepts sulfur from TusA and transfers it in turn to TusE. This Escherichia coli O17:K52:H18 (strain UMN026 / ExPEC) protein is Sulfurtransferase TusD.